The sequence spans 215 residues: Nucleoside triphosphate pyrophosphatase (215 aa).

Asp77 acts as the Proton acceptor in catalysis.

It belongs to the Maf family. Requires a divalent metal cation as cofactor.

The protein resides in the cytoplasm. It carries out the reaction a ribonucleoside 5'-triphosphate + H2O = a ribonucleoside 5'-phosphate + diphosphate + H(+). The catalysed reaction is a 2'-deoxyribonucleoside 5'-triphosphate + H2O = a 2'-deoxyribonucleoside 5'-phosphate + diphosphate + H(+). Nucleoside triphosphate pyrophosphatase. May have a dual role in cell division arrest and in preventing the incorporation of modified nucleotides into cellular nucleic acids. The chain is Nucleoside triphosphate pyrophosphatase from Rickettsia peacockii (strain Rustic).